Reading from the N-terminus, the 127-residue chain is Stationary phase protein 3 (127 aa).

The next 2 membrane-spanning stretches (helical) occupy residues 29 to 49 and 63 to 83; these read LFLFLFVFVFVFIFVYFFYVI and ANSIWYYLSIINIFFPLCFFL. N-linked (GlcNAc...) asparagine glycosylation occurs at N86.

The protein localises to the membrane. Its function is as follows. Required for survival during stationary phase. The polypeptide is Stationary phase protein 3 (SPG3) (Saccharomyces cerevisiae (strain ATCC 204508 / S288c) (Baker's yeast)).